Consider the following 627-residue polypeptide: Dual specificity testis-specific protein kinase 1 (627 aa).

A disordered region spans residues 1–36 (MAGERPPLRGPGPGEAPGEGPGGAGGGPGRGRPSSY). A compositionally biased stretch (gly residues) spans 11–30 (PGPGEAPGEGPGGAGGGPGR). The region spanning 52–309 (FDCAEKIGAG…TEITQHLEQI (258 aa)) is the Protein kinase domain. ATP is bound by residues 58–66 (IGAGFFSEV) and Lys-81. Asp-170 (proton acceptor) is an active-site residue. Position 215 is a phosphoserine; by autocatalysis (Ser-215). Positions 316-330 (ATPLAKPPLTKAPLT) are enriched in low complexity. Disordered stretches follow at residues 316–373 (ATPL…SWGD), 436–485 (RCRS…GLAP), 500–519 (CSSASQPWSPRSGPPLNNNP), and 532–565 (REPWNRAQHSLPRAAALERTEPSPPPSAPREPEE). Arg-338 bears the Omega-N-methylarginine mark. A compositionally biased stretch (basic and acidic residues) spans 348-357 (PDPRLSRSRS). Residues 421 to 525 (VTTPDILVQP…NNNPPAVVVN (105 aa)) are required for interaction with YWHAB. The segment at 528–625 (QGWAREPWNR…PTPSLQLPGA (98 aa)) is required for interaction with PARVA. The required for interaction with SPRED1 and SPRY2. Required for TESK1-mediated dephosphorylation of SPRY2 and SPRY2 inhibition of ERK phosphorylation stretch occupies residues 528–627 (QGWAREPWNR…PSLQLPGARS (100 aa)).

The protein belongs to the protein kinase superfamily. TKL Ser/Thr protein kinase family. In terms of assembly, interacts (via both C- and N-termini) with SPRY4 (via C-terminus); the interaction inhibits TESK1 kinase activity. Interacts with TAOK1; the interaction inhibits TAOK1 kinase activity. Interacts (via C-terminus) with SPRED1 (via C-terminus); the interaction inhibits TESK1 kinase activity. Interacts (via C-terminus) with PARVA/PARVIN (via C-terminus); the interaction inhibits TESK1 kinase activity. Interacts with YWHAB/14-3-3 beta; the interaction is dependent on the phosphorylation of TESK1 Ser-439 and inhibits TESK1 kinase activity. Interacts with SPRY1, SPRY3 and SPRED2. Interacts (via C-terminus) with SPRY2 (via C-terminus); the interaction disrupts SPRY2 interaction with PPP2CA/PP2A-C, possibly by vesicular sequestration of SPRY2. Therefore dephosphorylation of SPRY2 by the serine/threonine-protein phosphatase 2A (PP2A) holoenzyme is lost, inhibiting its interaction with GRB2. Requires Mg(2+) as cofactor. Mn(2+) is required as a cofactor. Autophosphorylated on serine and tyrosine residues. As to expression, expressed in testes and brain (at protein level).

The protein resides in the cytoplasm. The protein localises to the perinuclear region. It localises to the cytoskeleton. It is found in the microtubule organizing center. Its subcellular location is the centrosome. The protein resides in the cell projection. The protein localises to the lamellipodium. It carries out the reaction L-seryl-[protein] + ATP = O-phospho-L-seryl-[protein] + ADP + H(+). The enzyme catalyses L-threonyl-[protein] + ATP = O-phospho-L-threonyl-[protein] + ADP + H(+). It catalyses the reaction L-tyrosyl-[protein] + ATP = O-phospho-L-tyrosyl-[protein] + ADP + H(+). With respect to regulation, activated by autophosphorylation on Ser-215. Kinase activity is inhibited by SPRED1. Its function is as follows. Dual specificity protein kinase activity catalyzing autophosphorylation and phosphorylation of exogenous substrates on both serine/threonine and tyrosine residues. Regulates the cellular cytoskeleton by enhancing actin stress fiber formation via phosphorylation of cofilin and by preventing microtubule breakdown via inhibition of TAOK1/MARKK kinase activity. Inhibits podocyte motility via regulation of actin cytoskeletal dynamics and phosphorylation of CFL1. Positively regulates integrin-mediated cell spreading, via phosphorylation of cofilin. Suppresses ciliogenesis via multiple pathways; phosphorylation of CFL1, suppression of ciliary vesicle directional trafficking to the ciliary base, and by facilitating YAP1 nuclear localization where it acts as a transcriptional corepressor of the TEAD4 target genes AURKA and PLK1. Probably plays a central role at and after the meiotic phase of spermatogenesis. This Mus musculus (Mouse) protein is Dual specificity testis-specific protein kinase 1 (Tesk1).